The following is a 544-amino-acid chain: Chaperonin GroEL (544 aa).

ATP-binding positions include 30 to 33, K51, 87 to 91, G415, and D495; these read TLGP and DGTTT.

It belongs to the chaperonin (HSP60) family. As to quaternary structure, forms a cylinder of 14 subunits composed of two heptameric rings stacked back-to-back. Interacts with the co-chaperonin GroES.

Its subcellular location is the cell outer membrane. It carries out the reaction ATP + H2O + a folded polypeptide = ADP + phosphate + an unfolded polypeptide.. Functionally, together with its co-chaperonin GroES, plays an essential role in assisting protein folding. The GroEL-GroES system forms a nano-cage that allows encapsulation of the non-native substrate proteins and provides a physical environment optimized to promote and accelerate protein folding. This Neisseria gonorrhoeae protein is Chaperonin GroEL.